The sequence spans 188 residues: Peptidyl-prolyl cis-trans isomerase (188 aa).

The signal sequence occupies residues 1 to 20; the sequence is MLKRVAIVLGGLLISAHALA. The 161-residue stretch at 21-181 folds into the PPIase cyclophilin-type domain; the sequence is NTMVEMKTNL…QPVKIISVQI (161 aa).

Belongs to the cyclophilin-type PPIase family.

It localises to the periplasm. It carries out the reaction [protein]-peptidylproline (omega=180) = [protein]-peptidylproline (omega=0). In terms of biological role, PPIases accelerate the folding of proteins. It catalyzes the cis-trans isomerization of proline imidic peptide bonds in oligopeptides. This protein is not essential for growth. Presumably plays a role in signal transduction. This Acinetobacter baylyi (strain ATCC 33305 / BD413 / ADP1) protein is Peptidyl-prolyl cis-trans isomerase (rotA).